A 215-amino-acid polypeptide reads, in one-letter code: V-type ATP synthase subunit D (215 aa).

Belongs to the V-ATPase D subunit family.

Produces ATP from ADP in the presence of a proton gradient across the membrane. The polypeptide is V-type ATP synthase subunit D (Anaeromyxobacter sp. (strain Fw109-5)).